Reading from the N-terminus, the 370-residue chain is UDP-galactose transporter homolog 1 (370 aa).

A run of 10 helical transmembrane segments spans residues 22–42, 62–82, 115–135, 145–165, 175–195, 204–224, 242–262, 280–300, 307–327, and 333–353; these read ALTLIICVCGLYGTFLTWSIL, IIINLIQALFASIIGFIYNYV, CNVLKFMILISITSSIASPIG, LAYLLAKSCKLIPVMIVHFIF, YLVAGLVTLGVILFTMAHVTT, TLLGLTYLIGSMILDGLTNST, LMSLLNLFIFIWTSLYTIIFH, LIDIIGFAICGAIGQVFIFII, IILITATVTRKMLSMILSVIL, and SWEQWVGVGLVFGGIGLEAFI.

It belongs to the nucleotide-sugar transporter family. SLC35B subfamily.

It is found in the endoplasmic reticulum membrane. May be involved in specific transport of UDP-Gal from the cytosol to the Golgi lumen. Involved in the maintenance of optimal conditions for the folding of secretory pathway proteins in the endoplasmic reticulum. This is UDP-galactose transporter homolog 1 (HUT1) from Candida albicans (strain SC5314 / ATCC MYA-2876) (Yeast).